The chain runs to 399 residues: Imidazolonepropionase (399 aa).

Residues His-68 and His-70 each coordinate Fe(3+). The Zn(2+) site is built by His-68 and His-70. The 4-imidazolone-5-propanoate site is built by Arg-77, Tyr-140, and His-173. Tyr-140 contributes to the N-formimidoyl-L-glutamate binding site. A Fe(3+)-binding site is contributed by His-238. His-238 contributes to the Zn(2+) binding site. Position 241 (Gln-241) interacts with 4-imidazolone-5-propanoate. Asp-313 contributes to the Fe(3+) binding site. Residue Asp-313 coordinates Zn(2+). N-formimidoyl-L-glutamate contacts are provided by Asn-315 and Gly-317. Thr-318 is a 4-imidazolone-5-propanoate binding site.

It belongs to the metallo-dependent hydrolases superfamily. HutI family. It depends on Zn(2+) as a cofactor. Fe(3+) is required as a cofactor.

It is found in the cytoplasm. The enzyme catalyses 4-imidazolone-5-propanoate + H2O = N-formimidoyl-L-glutamate. Its pathway is amino-acid degradation; L-histidine degradation into L-glutamate; N-formimidoyl-L-glutamate from L-histidine: step 3/3. In terms of biological role, catalyzes the hydrolytic cleavage of the carbon-nitrogen bond in imidazolone-5-propanoate to yield N-formimidoyl-L-glutamate. It is the third step in the universal histidine degradation pathway. This chain is Imidazolonepropionase, found in Rhizorhabdus wittichii (strain DSM 6014 / CCUG 31198 / JCM 15750 / NBRC 105917 / EY 4224 / RW1) (Sphingomonas wittichii).